The chain runs to 882 residues: MTALTGDQIRQKFLDFYAAKGHTILPSASLIPDDPTVLLTIAGMLPFKPIFLGQEAPKVPRATTAQKCLRTNDIENVGRTARHHTFFEMLGNFSFGDYFKGEAIAWAWELMTTVYGLPPERLLVSVFENDDEAYDIWHRQVGLPKERIQRMGEESNFWTAGPTGPCGPCSEIYYDFYPEKGLANVDLDDDGRFIELYNLVFMELNQDDQGHRTPLKAKNIDTGMGLERMAQVLQGVPNNYETDLIFPIIEAAAQRAGIQYQKANASTQTSLKVIGDHTRAVVHLIADGVTASNVGRGYVLRRLIRRIVRHSRLLGINGLVTPDLAQVAIDLAANVYPNVRERQAVILSELQREEEQFLKTLDRGEKLLAEMLSPLKKAKGKKRSQPQLAGRDAFVLFDTYGFPLELTQEIAAEQGIGVDVAEFEACMAEQRQRSQAAHETIDVTVQEGIDSLGDQLHPTQFRGYEELSLTTTVTAILVAGHPATTATAGTEVQVILEATPFYAESGGQIGDRGYLASSDALVHIHDVQKQKELFVHYGKVERGSLKVGDRVSAQIDLSCRRRVQAHHTATHLLQAALKKLIDENISQAGSLVAFDRLRFDFNCPRPLTREELQQIEDQINAWISESHTTHTYIMALSEAKAKGAIAMFGEKYGEQVRVLDIPGVSMELCGGTHVHNTAEIGLFKIISESGVAAGIRRIEAIAGAAVRDYLQQRDSIVRELCDRFKAKPEEILDRISQLQADLKAQQKALEHLKAELALAKTQALLEQAKPVGNSHVLIASLAGVDPQGLKTAAEWLLNKLGSGAVVLATQPAADKVNLLVAASQDVVQRGVHAGQLVAALAQVCGGRGGGRPNFAQAGGSQPAKLAEALELAHSRLKEILES.

Positions 567, 571, 669, and 673 each coordinate Zn(2+).

Belongs to the class-II aminoacyl-tRNA synthetase family. Requires Zn(2+) as cofactor.

Its subcellular location is the cytoplasm. It catalyses the reaction tRNA(Ala) + L-alanine + ATP = L-alanyl-tRNA(Ala) + AMP + diphosphate. Catalyzes the attachment of alanine to tRNA(Ala) in a two-step reaction: alanine is first activated by ATP to form Ala-AMP and then transferred to the acceptor end of tRNA(Ala). Also edits incorrectly charged Ser-tRNA(Ala) and Gly-tRNA(Ala) via its editing domain. This chain is Alanine--tRNA ligase, found in Thermosynechococcus vestitus (strain NIES-2133 / IAM M-273 / BP-1).